Consider the following 207-residue polypeptide: UPF0319 protein VV1_2115 (207 aa).

The first 18 residues, 1-18 (MLRVLGLAGMLMSFNIHA), serve as a signal peptide directing secretion.

This sequence belongs to the UPF0319 family.

The polypeptide is UPF0319 protein VV1_2115 (Vibrio vulnificus (strain CMCP6)).